The following is a 193-amino-acid chain: Cell wall galactomannoprotein (193 aa).

The N-terminal stretch at methionine 1–alanine 17 is a signal peptide. 2 N-linked (GlcNAc...) asparagine glycosylation sites follow: asparagine 38 and asparagine 173.

The protein belongs to the cell wall mannoprotein 1 family. In terms of processing, galactomannoprotein, glycosylated.

Its subcellular location is the secreted. The protein resides in the cell wall. Constitutive protein of the cell wall. This chain is Cell wall galactomannoprotein, found in Armillaria ostoyae (Armillaria root rot fungus).